The sequence spans 131 residues: Lymphocyte antigen 6C2 (131 aa).

Residues Met1–Gly26 form the signal peptide. The region spanning Leu27–Gly116 is the UPAR/Ly6 domain. Intrachain disulfides connect Cys29–Cys53, Cys32–Cys41, Cys46–Cys74, Cys78–Cys95, and Cys96–Cys101. A lipid anchor (GPI-anchor amidated glycine) is attached at Gly109. A propeptide spans Ser110 to Leu131 (removed in mature form).

It is found in the cell membrane. The polypeptide is Lymphocyte antigen 6C2 (Ly6c2) (Mus musculus (Mouse)).